A 572-amino-acid polypeptide reads, in one-letter code: Probable transporter MCH1 (572 aa).

A compositionally biased stretch (polar residues) spans 1–29 (MSSSAPDDTQASRLDADQISTRSSSYASD). The segment at 1–39 (MSSSAPDDTQASRLDADQISTRSSSYASDNDTDSTETRI) is disordered. Asn30 is a glycosylation site (N-linked (GlcNAc...) asparagine). 10 consecutive transmembrane segments (helical) span residues 50–70 (LLAF…VVFS), 89–109 (AVAI…GYIC), 116–136 (PLAL…AGVY), 159–179 (FLML…MAAV), 193–213 (GLAL…LSQA), 232–252 (VFRF…LGTF), 335–355 (LAFL…GTII), 426–446 (FMAF…SGLV), 459–479 (LVGA…TIIW), and 488–508 (YGLI…VYSA). The N-linked (GlcNAc...) asparagine glycan is linked to Asn515. A helical membrane pass occupies residues 539–559 (PTYWAETITVWIAVGLLLWAW).

Belongs to the major facilitator superfamily.

It localises to the vacuole membrane. In terms of biological role, probable transporter. The polypeptide is Probable transporter MCH1 (MCH1) (Gibberella zeae (strain ATCC MYA-4620 / CBS 123657 / FGSC 9075 / NRRL 31084 / PH-1) (Wheat head blight fungus)).